A 398-amino-acid chain; its full sequence is Dual-specificity RNA methyltransferase RlmN (398 aa).

Glu119 (proton acceptor) is an active-site residue. Residues 125 to 364 enclose the Radical SAM core domain; the sequence is EADRATLCVS…TIVRKTRGDD (240 aa). Cysteines 132 and 369 form a disulfide. [4Fe-4S] cluster is bound by residues Cys139, Cys143, and Cys146. Residues 193-194, Ser225, 247-249, and Asn326 contribute to the S-adenosyl-L-methionine site; these read GE and SLH. The S-methylcysteine intermediate role is filled by Cys369.

This sequence belongs to the radical SAM superfamily. RlmN family. The cofactor is [4Fe-4S] cluster.

Its subcellular location is the cytoplasm. The enzyme catalyses adenosine(2503) in 23S rRNA + 2 reduced [2Fe-2S]-[ferredoxin] + 2 S-adenosyl-L-methionine = 2-methyladenosine(2503) in 23S rRNA + 5'-deoxyadenosine + L-methionine + 2 oxidized [2Fe-2S]-[ferredoxin] + S-adenosyl-L-homocysteine. The catalysed reaction is adenosine(37) in tRNA + 2 reduced [2Fe-2S]-[ferredoxin] + 2 S-adenosyl-L-methionine = 2-methyladenosine(37) in tRNA + 5'-deoxyadenosine + L-methionine + 2 oxidized [2Fe-2S]-[ferredoxin] + S-adenosyl-L-homocysteine. Its function is as follows. Specifically methylates position 2 of adenine 2503 in 23S rRNA and position 2 of adenine 37 in tRNAs. m2A2503 modification seems to play a crucial role in the proofreading step occurring at the peptidyl transferase center and thus would serve to optimize ribosomal fidelity. In Yersinia pestis, this protein is Dual-specificity RNA methyltransferase RlmN.